Here is a 450-residue protein sequence, read N- to C-terminus: Sensor histidine kinase EnvZ (450 aa).

Over 1–15 the chain is Cytoplasmic; the sequence is MRRMRFSPRSSFART. A helical transmembrane segment spans residues 16–35; that stretch reads LLLIVTLLFVSLVTTYLVVL. The Periplasmic segment spans residues 36–158; the sequence is NFAILPSLQQ…LTEIHQGDFS (123 aa). A helical membrane pass occupies residues 159–179; the sequence is PLFRYTLAIMLLAIGGAWLFI. Positions 180-232 constitute an HAMP domain; that stretch reads RIQNRPLVDLEHAALQVGKGIIPPPLREYGASEVRSVTRAFNHMAAGVKQLAD. Residues 180 to 450 are Cytoplasmic-facing; sequence RIQNRPLVDL…ARVQGTTKEA (271 aa). A cytoplasmic dimerization domain (CDD), when dimerized forms osmosensitive core region spans residues 223–289; it reads MAAGVKQLAD…IIEQFIDYLR (67 aa). Residues 240–440 form the Histidine kinase domain; it reads GVSHDLRTPL…SIRAWLPVPV (201 aa). Residues His-243, 347-351, Asp-373, 392-393, and 402-406 contribute to the ATP site; these read NAARY, RG, and TGLGL. His-243 carries the phosphohistidine; by autocatalysis modification.

Homodimer. Autophosphorylated.

The protein resides in the cell inner membrane. The catalysed reaction is ATP + protein L-histidine = ADP + protein N-phospho-L-histidine.. Its function is as follows. Member of the two-component regulatory system EnvZ/OmpR involved in regulating expression of the outer membrane porins OmpC and OmpF as well as other genes. Unlike E.coli or S.typhimurium both porins are expressed constitutively. Involved in regulation of the biosynthesis of Vi polysaccharide, a capsular antigen thought to be involved in the virulence of S.typhi. Vi antigen is synthesized at low NaCl concentrations (under 0.4 M). EnvZ functions as a membrane-associated protein kinase that phosphorylates OmpR in response to environmental signals. The chain is Sensor histidine kinase EnvZ (envZ) from Salmonella typhi.